Reading from the N-terminus, the 358-residue chain is Alanine racemase (358 aa).

Lys34 serves as the catalytic Proton acceptor; specific for D-alanine. Lys34 is modified (N6-(pyridoxal phosphate)lysine). Arg129 contacts substrate. Catalysis depends on Tyr254, which acts as the Proton acceptor; specific for L-alanine. Met302 serves as a coordination point for substrate.

This sequence belongs to the alanine racemase family. Pyridoxal 5'-phosphate is required as a cofactor.

The catalysed reaction is L-alanine = D-alanine. Its pathway is amino-acid biosynthesis; D-alanine biosynthesis; D-alanine from L-alanine: step 1/1. In terms of biological role, catalyzes the interconversion of L-alanine and D-alanine. May also act on other amino acids. This chain is Alanine racemase (alr), found in Aliivibrio salmonicida (strain LFI1238) (Vibrio salmonicida (strain LFI1238)).